We begin with the raw amino-acid sequence, 412 residues long: Inositol polyphosphate-5-phosphatase A (412 aa).

Cysteine 409 carries the S-farnesyl cysteine lipid modification. Positions 410 to 412 are cleaved as a propeptide — removed in mature form; the sequence is VVQ.

Belongs to the inositol 1,4,5-trisphosphate 5-phosphatase type I family. As to quaternary structure, interacts with TASOR. Isoprenylation at Cys-409 is required for localization at the membrane.

It is found in the cell membrane. Its subcellular location is the cell projection. The protein localises to the dendrite. It carries out the reaction 1D-myo-inositol 1,4,5-trisphosphate + H2O = 1D-myo-inositol 1,4-bisphosphate + phosphate. It catalyses the reaction 1D-myo-inositol 1,3,4,5-tetrakisphosphate + H2O = 1D-myo-inositol 1,3,4-trisphosphate + phosphate. Its activity is regulated as follows. Inhibited by EDTA and 2,3-bisphosphoglycerate. Functionally, phosphatase that specifically hydrolyzes the 5-phosphate of inositol 1,4,5-trisphosphate to inositol 1,4-bisphosphate, and inositol 1,3,4,5-tetrasphosphate to inositol 1,3,4-trisphosphate. Plays a crucial role in the survival of cerebellar Purkinje cells. The protein is Inositol polyphosphate-5-phosphatase A (INPP5A) of Canis lupus familiaris (Dog).